The primary structure comprises 64 residues: Large ribosomal subunit protein bL35 (64 aa).

It belongs to the bacterial ribosomal protein bL35 family.

In Coxiella burnetii (strain RSA 331 / Henzerling II), this protein is Large ribosomal subunit protein bL35.